We begin with the raw amino-acid sequence, 356 residues long: Phosphate acyltransferase (356 aa).

It belongs to the PlsX family. Homodimer. Probably interacts with PlsY.

It is found in the cytoplasm. The enzyme catalyses a fatty acyl-[ACP] + phosphate = an acyl phosphate + holo-[ACP]. It participates in lipid metabolism; phospholipid metabolism. In terms of biological role, catalyzes the reversible formation of acyl-phosphate (acyl-PO(4)) from acyl-[acyl-carrier-protein] (acyl-ACP). This enzyme utilizes acyl-ACP as fatty acyl donor, but not acyl-CoA. The chain is Phosphate acyltransferase from Bartonella henselae (strain ATCC 49882 / DSM 28221 / CCUG 30454 / Houston 1) (Rochalimaea henselae).